Here is a 283-residue protein sequence, read N- to C-terminus: Bifunctional protein FolD (283 aa).

Residues 164 to 166 (GRS) and Ser189 contribute to the NADP(+) site.

This sequence belongs to the tetrahydrofolate dehydrogenase/cyclohydrolase family. Homodimer.

It catalyses the reaction (6R)-5,10-methylene-5,6,7,8-tetrahydrofolate + NADP(+) = (6R)-5,10-methenyltetrahydrofolate + NADPH. The catalysed reaction is (6R)-5,10-methenyltetrahydrofolate + H2O = (6R)-10-formyltetrahydrofolate + H(+). Its pathway is one-carbon metabolism; tetrahydrofolate interconversion. Its function is as follows. Catalyzes the oxidation of 5,10-methylenetetrahydrofolate to 5,10-methenyltetrahydrofolate and then the hydrolysis of 5,10-methenyltetrahydrofolate to 10-formyltetrahydrofolate. The chain is Bifunctional protein FolD from Lactobacillus acidophilus (strain ATCC 700396 / NCK56 / N2 / NCFM).